Here is a 388-residue protein sequence, read N- to C-terminus: MAAFKLADRLATLPPYLFAGIDKVKAEVAARGVDIISLGIGDPDMATPGFIIEAMKEAIARPANHQYPSYVGMLAFRQEVANWYDRRFGVSLDPATEVIGLIGSKEGIAHFPFAFINPGDLVLVCTPNYPVYHIATGFAGGEVQFVPLLEENDFLPDLDAIPEDTWKRAKMIFVNYPNNPTAATAPLGFYEKLVDICRRFDVIIAHDTAYTEIYYDEDNRPPSILSVPGAKDVAIEFHSLSKTYNMTGWRVGMAVGNPTLVAGLGKIKENMDSGIFQAVQEASIVALRDGDDFCRELRGIYRQRRDTVINALHKAGIQCRVPQATFYVWARVPQGHTSADFVTRVLQETGVVVTPGNGFGTPGEGFFRISLTVDNARLEEAVSRIAKL.

Substrate is bound by residues Tyr-16 and Gly-41. Pyridoxal 5'-phosphate-binding positions include Tyr-70, Ser-104 to Lys-105, Tyr-129, Asn-179, Tyr-210, and Ser-239 to Ser-241. Substrate contacts are provided by Lys-105, Tyr-129, and Asn-179. Lys-242 is subject to N6-(pyridoxal phosphate)lysine. Arg-250 contacts pyridoxal 5'-phosphate. Substrate is bound at residue Arg-368.

Belongs to the class-I pyridoxal-phosphate-dependent aminotransferase family. LL-diaminopimelate aminotransferase subfamily. In terms of assembly, homodimer. Pyridoxal 5'-phosphate is required as a cofactor.

The catalysed reaction is (2S,6S)-2,6-diaminopimelate + 2-oxoglutarate = (S)-2,3,4,5-tetrahydrodipicolinate + L-glutamate + H2O + H(+). The protein operates within amino-acid biosynthesis; L-lysine biosynthesis via DAP pathway; LL-2,6-diaminopimelate from (S)-tetrahydrodipicolinate (aminotransferase route): step 1/1. Functionally, involved in the synthesis of meso-diaminopimelate (m-DAP or DL-DAP), required for both lysine and peptidoglycan biosynthesis. Catalyzes the direct conversion of tetrahydrodipicolinate to LL-diaminopimelate. This is LL-diaminopimelate aminotransferase from Nitratidesulfovibrio vulgaris (strain ATCC 29579 / DSM 644 / CCUG 34227 / NCIMB 8303 / VKM B-1760 / Hildenborough) (Desulfovibrio vulgaris).